We begin with the raw amino-acid sequence, 416 residues long: Formyl-CoA:oxalate CoA-transferase (416 aa).

Residues 17 to 18 (QS), Arg-38, 72 to 75 (LNTK), 96 to 98 (NFH), His-104, and 137 to 140 (KAYE) contribute to the CoA site. Residue Asp-169 is the Nucleophile of the active site. 248–250 (GGQ) is a binding site for substrate. 273 to 275 (QEQ) is a CoA binding site.

This sequence belongs to the CoA-transferase III family. Frc subfamily. As to quaternary structure, homodimer.

It catalyses the reaction formyl-CoA + oxalate = oxalyl-CoA + formate. Its pathway is metabolic intermediate degradation; oxalate degradation; CO(2) and formate from oxalate: step 1/2. Involved in the catabolism of oxalate and in the adapatation to low pH via the induction of the oxalate-dependent acid tolerance response (ATR). Catalyzes the transfer of the CoA moiety from formyl-CoA to oxalate. This is Formyl-CoA:oxalate CoA-transferase from Escherichia coli O81 (strain ED1a).